The primary structure comprises 442 residues: Tryptophan synthase beta chain 2 (442 aa).

Lys-122 is modified (N6-(pyridoxal phosphate)lysine).

It belongs to the TrpB family. Tetramer of two alpha and two beta chains. Pyridoxal 5'-phosphate serves as cofactor.

It carries out the reaction (1S,2R)-1-C-(indol-3-yl)glycerol 3-phosphate + L-serine = D-glyceraldehyde 3-phosphate + L-tryptophan + H2O. The protein operates within amino-acid biosynthesis; L-tryptophan biosynthesis; L-tryptophan from chorismate: step 5/5. Functionally, the beta subunit is responsible for the synthesis of L-tryptophan from indole and L-serine. The protein is Tryptophan synthase beta chain 2 (trpB2) of Methanosarcina mazei (strain ATCC BAA-159 / DSM 3647 / Goe1 / Go1 / JCM 11833 / OCM 88) (Methanosarcina frisia).